Here is a 314-residue protein sequence, read N- to C-terminus: 4-hydroxy-3-methylbut-2-enyl diphosphate reductase (314 aa).

Cysteine 12 lines the [4Fe-4S] cluster pocket. (2E)-4-hydroxy-3-methylbut-2-enyl diphosphate is bound by residues histidine 41 and histidine 74. 2 residues coordinate dimethylallyl diphosphate: histidine 41 and histidine 74. Residues histidine 41 and histidine 74 each coordinate isopentenyl diphosphate. Residue cysteine 96 participates in [4Fe-4S] cluster binding. Histidine 124 contacts (2E)-4-hydroxy-3-methylbut-2-enyl diphosphate. A dimethylallyl diphosphate-binding site is contributed by histidine 124. Histidine 124 is a binding site for isopentenyl diphosphate. The Proton donor role is filled by glutamate 126. Threonine 168 is a binding site for (2E)-4-hydroxy-3-methylbut-2-enyl diphosphate. Cysteine 198 contributes to the [4Fe-4S] cluster binding site. 4 residues coordinate (2E)-4-hydroxy-3-methylbut-2-enyl diphosphate: serine 226, serine 227, asparagine 228, and serine 270. Serine 226, serine 227, asparagine 228, and serine 270 together coordinate dimethylallyl diphosphate. Residues serine 226, serine 227, asparagine 228, and serine 270 each coordinate isopentenyl diphosphate.

It belongs to the IspH family. It depends on [4Fe-4S] cluster as a cofactor.

It carries out the reaction isopentenyl diphosphate + 2 oxidized [2Fe-2S]-[ferredoxin] + H2O = (2E)-4-hydroxy-3-methylbut-2-enyl diphosphate + 2 reduced [2Fe-2S]-[ferredoxin] + 2 H(+). The enzyme catalyses dimethylallyl diphosphate + 2 oxidized [2Fe-2S]-[ferredoxin] + H2O = (2E)-4-hydroxy-3-methylbut-2-enyl diphosphate + 2 reduced [2Fe-2S]-[ferredoxin] + 2 H(+). The protein operates within isoprenoid biosynthesis; dimethylallyl diphosphate biosynthesis; dimethylallyl diphosphate from (2E)-4-hydroxy-3-methylbutenyl diphosphate: step 1/1. It participates in isoprenoid biosynthesis; isopentenyl diphosphate biosynthesis via DXP pathway; isopentenyl diphosphate from 1-deoxy-D-xylulose 5-phosphate: step 6/6. Catalyzes the conversion of 1-hydroxy-2-methyl-2-(E)-butenyl 4-diphosphate (HMBPP) into a mixture of isopentenyl diphosphate (IPP) and dimethylallyl diphosphate (DMAPP). Acts in the terminal step of the DOXP/MEP pathway for isoprenoid precursor biosynthesis. This chain is 4-hydroxy-3-methylbut-2-enyl diphosphate reductase, found in Pseudomonas fluorescens (strain Pf0-1).